Consider the following 448-residue polypeptide: CCA-adding enzyme (448 aa).

2 residues coordinate ATP: Ser52 and Lys55. Residues Ser52 and Lys55 each coordinate CTP. Residues Asp64, Asp66, and Asp118 each contribute to the Mg(2+) site. His141, Lys160, and Tyr169 together coordinate ATP. CTP-binding residues include His141, Lys160, and Tyr169.

It belongs to the tRNA nucleotidyltransferase/poly(A) polymerase family. Archaeal CCA-adding enzyme subfamily. Homodimer. Requires Mg(2+) as cofactor.

The catalysed reaction is a tRNA precursor + 2 CTP + ATP = a tRNA with a 3' CCA end + 3 diphosphate. The enzyme catalyses a tRNA with a 3' CCA end + 2 CTP + ATP = a tRNA with a 3' CCACCA end + 3 diphosphate. Functionally, catalyzes the addition and repair of the essential 3'-terminal CCA sequence in tRNAs without using a nucleic acid template. Adds these three nucleotides in the order of C, C, and A to the tRNA nucleotide-73, using CTP and ATP as substrates and producing inorganic pyrophosphate. tRNA 3'-terminal CCA addition is required both for tRNA processing and repair. Also involved in tRNA surveillance by mediating tandem CCA addition to generate a CCACCA at the 3' terminus of unstable tRNAs. While stable tRNAs receive only 3'-terminal CCA, unstable tRNAs are marked with CCACCA and rapidly degraded. The protein is CCA-adding enzyme of Pyrococcus abyssi (strain GE5 / Orsay).